An 80-amino-acid polypeptide reads, in one-letter code: Putative membrane protein insertion efficiency factor (80 aa).

Belongs to the UPF0161 family.

The protein localises to the cell inner membrane. Functionally, could be involved in insertion of integral membrane proteins into the membrane. The protein is Putative membrane protein insertion efficiency factor of Paracoccus denitrificans (strain Pd 1222).